Here is a 300-residue protein sequence, read N- to C-terminus: GTPase Era (300 aa).

In terms of domain architecture, Era-type G spans 5-172; sequence HSGFVAIIGR…LTALTDALPV (168 aa). The G1 stretch occupies residues 13 to 20; the sequence is GRPNVGKS. 13–20 contacts GTP; it reads GRPNVGKS. The tract at residues 39 to 43 is G2; sequence QTTRN. A G3 region spans residues 60 to 63; the sequence is DTPG. GTP-binding positions include 60 to 64 and 122 to 125; these read DTPGI and NKID. The segment at 122 to 125 is G4; that stretch reads NKID. The segment at 151-153 is G5; sequence ISA. Residues 203-280 enclose the KH type-2 domain; that stretch reads TRDEVPHAVA…NLKLWVRVQK (78 aa).

The protein belongs to the TRAFAC class TrmE-Era-EngA-EngB-Septin-like GTPase superfamily. Era GTPase family. In terms of assembly, monomer.

The protein localises to the cytoplasm. It is found in the cell membrane. An essential GTPase that binds both GDP and GTP, with rapid nucleotide exchange. Plays a role in 16S rRNA processing and 30S ribosomal subunit biogenesis and possibly also in cell cycle regulation and energy metabolism. The sequence is that of GTPase Era from Lacticaseibacillus paracasei (strain ATCC 334 / BCRC 17002 / CCUG 31169 / CIP 107868 / KCTC 3260 / NRRL B-441) (Lactobacillus paracasei).